Consider the following 83-residue polypeptide: Translational regulator CsrA (83 aa).

Belongs to the CsrA/RsmA family. In terms of assembly, homodimer; the beta-strands of each monomer intercalate to form a hydrophobic core, while the alpha-helices form wings that extend away from the core.

It localises to the cytoplasm. Its function is as follows. A translational regulator that binds mRNA to regulate translation initiation and/or mRNA stability. Usually binds in the 5'-UTR at or near the Shine-Dalgarno sequence preventing ribosome-binding, thus repressing translation. Its main target seems to be the major flagellin gene, while its function is anatagonized by FliW. The chain is Translational regulator CsrA from Thermotoga maritima (strain ATCC 43589 / DSM 3109 / JCM 10099 / NBRC 100826 / MSB8).